The following is a 255-amino-acid chain: High-affinity branched-chain amino acid transport ATP-binding protein LivG (255 aa).

One can recognise an ABC transporter domain in the interval 6-254 (LAVNGLMMRF…PDVIRAYLGE (249 aa)). Position 38-45 (38-45 (GPNGAGKT)) interacts with ATP.

Belongs to the ABC transporter superfamily.

In terms of biological role, component of the high-affinity branched-chain amino acid transport system. This chain is High-affinity branched-chain amino acid transport ATP-binding protein LivG (livG), found in Salmonella typhi.